A 187-amino-acid polypeptide reads, in one-letter code: Peptidyl-tRNA hydrolase (187 aa).

Tyrosine 18 contacts tRNA. Histidine 23 (proton acceptor) is an active-site residue. 3 residues coordinate tRNA: phenylalanine 65, asparagine 67, and asparagine 113.

It belongs to the PTH family. In terms of assembly, monomer.

Its subcellular location is the cytoplasm. The catalysed reaction is an N-acyl-L-alpha-aminoacyl-tRNA + H2O = an N-acyl-L-amino acid + a tRNA + H(+). Functionally, hydrolyzes ribosome-free peptidyl-tRNAs (with 1 or more amino acids incorporated), which drop off the ribosome during protein synthesis, or as a result of ribosome stalling. Its function is as follows. Catalyzes the release of premature peptidyl moieties from peptidyl-tRNA molecules trapped in stalled 50S ribosomal subunits, and thus maintains levels of free tRNAs and 50S ribosomes. The polypeptide is Peptidyl-tRNA hydrolase (Coxiella burnetii (strain RSA 331 / Henzerling II)).